Here is a 256-residue protein sequence, read N- to C-terminus: Ubiquinone/menaquinone biosynthesis C-methyltransferase UbiE (256 aa).

S-adenosyl-L-methionine is bound by residues Thr79, Asp100, and 128-129 (DA).

The protein belongs to the class I-like SAM-binding methyltransferase superfamily. MenG/UbiE family.

It catalyses the reaction a 2-demethylmenaquinol + S-adenosyl-L-methionine = a menaquinol + S-adenosyl-L-homocysteine + H(+). The enzyme catalyses a 2-methoxy-6-(all-trans-polyprenyl)benzene-1,4-diol + S-adenosyl-L-methionine = a 5-methoxy-2-methyl-3-(all-trans-polyprenyl)benzene-1,4-diol + S-adenosyl-L-homocysteine + H(+). The protein operates within quinol/quinone metabolism; menaquinone biosynthesis; menaquinol from 1,4-dihydroxy-2-naphthoate: step 2/2. It participates in cofactor biosynthesis; ubiquinone biosynthesis. In terms of biological role, methyltransferase required for the conversion of demethylmenaquinol (DMKH2) to menaquinol (MKH2) and the conversion of 2-polyprenyl-6-methoxy-1,4-benzoquinol (DDMQH2) to 2-polyprenyl-3-methyl-6-methoxy-1,4-benzoquinol (DMQH2). The polypeptide is Ubiquinone/menaquinone biosynthesis C-methyltransferase UbiE (Pseudomonas fluorescens (strain Pf0-1)).